The following is a 906-amino-acid chain: MCRIAGGPRTLLPLLAALLQASLEASGELALCKTGFPEDVYSAVLPKTVHEGQPLLNVKFSNCNRKRKVQYESSEPADFKVDEDGTVYAVRSFPLSAEQAKFLIYAQDKETQEKWQVAVNLSLEPSLTEEPMKEPHEIEEIVFPRQLAKHSGALQRQKRDWVIPPINLPENSRGPFPQELVRIRSDRDKNLSLRYSVTGPGADQPPTGIFIINPISGQLSVTKPLDRELIARFHLRAHAVDINGNQVENPIDIVINVIDMNDNRPEFLHQVWNGSVPEGSKPGTYVMTVTAIDADDPNALNGMLRYRILSQAPSTPSPNMFTINNETGDIITVAAGLDREKVQQYTLIIQATDMEGNPTYGLSNTATAVITVTDVNDNPPEFTAMTFYGEVPENRVDVIVANLTVTDKDQPHTPAWNAAYRISGGDPTGRFAILTDPNSNDGLVTVVKPIDFETNRMFVLTVAAENQVPLAKGIQHPPQSTATVSVTVIDVNENPYFAPNPKIIRQEEGLHAGTMLTTLTAQDPDRYMQQNIRYTKLSDPANWLKIDPVNGQITTIAVLDRESPNVKNNIYNATFLASDNGIPPMSGTGTLQIYLLDINDNAPQVLPQEAETCETPEPNSINITALDYDIDPNAGPFAFDLPLSPATIKRNWTITRLNGDFAQLNLKIKFLEAGIYEVPIVITDSGNPPKSNISILRVKVCQCDSNGDCTDVDRIVGAGLGTGTIIAILLCIIILLILVLMFVVWMKRRDKERQAKQLLIDPEDDVRDNILKYDEEGGGEEDQDYDLSQLQQPDTVEPDAIKPVGIRRLDERPIHAEPQYPVRSAAPHPGDIGDFINEGLKAADNDPTAPPYDSLLVFDYEGSGSTAGSLSSLNSSSSGGDQDYDYLNDWGPRFKKLADMYGGGDD.

An N-terminal signal peptide occupies residues 1–25 (MCRIAGGPRTLLPLLAALLQASLEA). Residues 26–159 (SGELALCKTG…HSGALQRQKR (134 aa)) constitute a propeptide that is removed on maturation. Ser-96 carries the post-translational modification Phosphoserine. Cadherin domains follow at residues 160-267 (DWVI…RPEF), 268-382 (LHQV…PPEF), 383-497 (TAMT…NPYF), 498-603 (APNP…DNAP), and 604-717 (QVLP…RIVG). Residues 160-724 (DWVIPPINLP…IVGAGLGTGT (565 aa)) lie on the Extracellular side of the membrane. Glu-170 provides a ligand contact to Ca(2+). Asn-190 carries N-linked (GlcNAc...) asparagine glycosylation. Ca(2+)-binding residues include Asp-226, Glu-228, Asp-259, Met-260, Asn-261, Asp-262, and Asn-263. Asn-273 is a glycosylation site (N-linked (GlcNAc...) asparagine). Ca(2+) contacts are provided by Asp-293, Asp-295, and Asn-301. A glycan (N-linked (GlcNAc...) asparagine) is linked at Asn-325. A Ca(2+)-binding site is contributed by Asp-353. 5 N-linked (GlcNAc...) asparagine glycosylation sites follow: Asn-402, Asn-572, Asn-622, Asn-651, and Asn-692. The helical transmembrane segment at 725 to 745 (IIAILLCIIILLILVLMFVVW) threads the bilayer. At 746 to 906 (MKRRDKERQA…LADMYGGGDD (161 aa)) the chain is on the cytoplasmic side. The segment covering 863–880 (SGSTAGSLSSLNSSSSGG) has biased composition (low complexity). Positions 863–883 (SGSTAGSLSSLNSSSSGGDQD) are disordered.

In terms of assembly, homodimer (via extracellular region). Can also form heterodimers with other cadherins (via extracellular region). Dimerization occurs in trans, i.e. with a cadherin chain from another cell. Interacts with PCDH8; this complex may also include TAOK2. The interaction with PCDH8 may lead to internalization through TAOK2/p38 MAPK pathway. Identified in a complex containing FGFR4, NCAM1, CDH2, PLCG1, FRS2, SRC, SHC1, GAP43 and CTTN. May interact with OBSCN (via protein kinase domain 2). Interacts with FBXO45. Post-translationally, cleaved by MMP24. Ectodomain cleavage leads to the generation of a soluble 90 kDa N-terminal soluble fragment and a 45 kDa membrane-bound C-terminal fragment 1 (CTF1), which is further cleaved by gamma-secretase into a 35 kDa. Cleavage in neural stem cells by MMP24 affects CDH2-mediated anchorage of neural stem cells to ependymocytes in the adult subependymal zone, leading to modulate neural stem cell quiescence. In terms of processing, may be phosphorylated by OBSCN. As to expression, in testis, expressed in Sertoli and germ cells.

It localises to the cell membrane. The protein resides in the sarcolemma. Its subcellular location is the cell junction. It is found in the cell surface. The protein localises to the desmosome. It localises to the adherens junction. Functionally, calcium-dependent cell adhesion protein; preferentially mediates homotypic cell-cell adhesion by dimerization with a CDH2 chain from another cell. Cadherins may thus contribute to the sorting of heterogeneous cell types. Acts as a regulator of neural stem cells quiescence by mediating anchorage of neural stem cells to ependymocytes in the adult subependymal zone: upon cleavage by MMP24, CDH2-mediated anchorage is affected, leading to modulate neural stem cell quiescence. Plays a role in cell-to-cell junction formation between pancreatic beta cells and neural crest stem (NCS) cells, promoting the formation of processes by NCS cells. Required for proper neurite branching. Required for pre- and postsynaptic organization. CDH2 may be involved in neuronal recognition mechanism. In hippocampal neurons, may regulate dendritic spine density. This chain is Cadherin-2 (Cdh2), found in Rattus norvegicus (Rat).